Reading from the N-terminus, the 205-residue chain is Dephospho-CoA kinase (205 aa).

In terms of domain architecture, DPCK spans 7 to 205; the sequence is IIGITGRIAS…QEIINYERFE (199 aa). 15–20 is an ATP binding site; it reads ASGKDA.

This sequence belongs to the CoaE family.

Its subcellular location is the cytoplasm. The enzyme catalyses 3'-dephospho-CoA + ATP = ADP + CoA + H(+). The protein operates within cofactor biosynthesis; coenzyme A biosynthesis; CoA from (R)-pantothenate: step 5/5. In terms of biological role, catalyzes the phosphorylation of the 3'-hydroxyl group of dephosphocoenzyme A to form coenzyme A. The protein is Dephospho-CoA kinase of Borrelia garinii subsp. bavariensis (strain ATCC BAA-2496 / DSM 23469 / PBi) (Borreliella bavariensis).